A 360-amino-acid chain; its full sequence is Ribosomal RNA large subunit methyltransferase M (360 aa).

S-adenosyl-L-methionine-binding positions include Ser-187, 220 to 223, Asp-239, Asp-259, and Asp-276; that span reads CPGG. Lys-305 acts as the Proton acceptor in catalysis.

Belongs to the class I-like SAM-binding methyltransferase superfamily. RNA methyltransferase RlmE family. RlmM subfamily. As to quaternary structure, monomer.

The protein resides in the cytoplasm. It catalyses the reaction cytidine(2498) in 23S rRNA + S-adenosyl-L-methionine = 2'-O-methylcytidine(2498) in 23S rRNA + S-adenosyl-L-homocysteine + H(+). Functionally, catalyzes the 2'-O-methylation at nucleotide C2498 in 23S rRNA. The protein is Ribosomal RNA large subunit methyltransferase M of Shewanella sediminis (strain HAW-EB3).